The sequence spans 196 residues: UPF0340 protein TT_C0214 (196 aa).

This sequence belongs to the UPF0340 family.

The chain is UPF0340 protein TT_C0214 from Thermus thermophilus (strain ATCC BAA-163 / DSM 7039 / HB27).